Reading from the N-terminus, the 1154-residue chain is FERM domain-containing protein A (1154 aa).

5 disordered regions span residues 122-149, 432-468, 715-734, 771-794, and 961-980; these read NNNS…SSSS, NLSS…NHHN, NKNN…SSSS, SNSN…TSSS, and TNGS…NNGI. 2 consecutive FERM domains span residues 218 to 547 and 666 to 1103; these read PLHQ…PSIQ and REIV…QTKL. The segment covering 437–447 has biased composition (gly residues); the sequence is GGSGNGSGSGN. Residues 448–463 are compositionally biased toward low complexity; the sequence is GSSSSSSNSSSGNNNN.

Its function is as follows. Key regulator of adhesion dynamics, it acts as an anti-adhesive. Plays a critical role in the regulation of cell-cell adhesion, multi-cellular development and, in particular, the formation of the organising center known as the tip. Required for turnover of paxillin-adhesion sites during cell migration. Plays a major role in normal cell shape, cell-substrate adhesion and actin cytoskeleton organization. The sequence is that of FERM domain-containing protein A (frmA) from Dictyostelium discoideum (Social amoeba).